A 315-amino-acid polypeptide reads, in one-letter code: Ankyrin repeat domain-containing protein EMB506, chloroplastic (315 aa).

Residues methionine 1–arginine 39 constitute a chloroplast transit peptide. The segment covering lysine 44 to glutamine 65 has biased composition (polar residues). Residues lysine 44–serine 106 are disordered. Over residues glutamate 72–aspartate 104 the composition is skewed to acidic residues. ANK repeat units lie at residues lysine 151 to aspartate 180, aspartate 184 to leucine 213, aspartate 217 to valine 246, glutamate 250 to arginine 279, and aspartate 283 to leucine 307.

Interacts with AKR. No homodimerization observed. In terms of tissue distribution, expressed in roots, inflorescence stems, flowers, siliques, dry seeds and mature cauline leaves.

The protein localises to the plastid. Its subcellular location is the chloroplast. In terms of biological role, involved in the initial differentiation of the proplastid during the embryo development. Also required for correct cotyledon, true leaf and cauline leaf margin development. This chain is Ankyrin repeat domain-containing protein EMB506, chloroplastic (EMB506), found in Arabidopsis thaliana (Mouse-ear cress).